A 237-amino-acid polypeptide reads, in one-letter code: MVLQYPQNKILVLSDHPHNFSKTQFLQDLFHCSSTGISIVKDQTWENRYYKVHFDLYIDSCKDIPVWVEEFITPECEPLRNVMAGIILITDIRQTKPQELLHQFMIAAHRNTFVVLVNVNEEVEQDEIDELNEIWSNAFTNVIEFVNWKRSKPTVNHNDYGEKLGLDRIQEIIDTHDWLKCEVLPATKIREEIPNEMPLEQIIRNLQSARLKYKSIENSSEADAFANEMADELSRYL.

The protein belongs to the IRC6 family.

Involved in gross chromosomal rearrangements (GCRs) and telomere healing. This Saccharomyces cerevisiae (strain YJM789) (Baker's yeast) protein is Increased recombination centers protein 6 (IRC6).